The chain runs to 224 residues: Ribonuclease HII (224 aa).

Residues 1-210 (MKIGGIDEAG…VRKIEESIKA (210 aa)) form the RNase H type-2 domain. The a divalent metal cation site is built by Asp-7, Glu-8, and Asp-105.

Belongs to the RNase HII family. Mn(2+) serves as cofactor. The cofactor is Mg(2+).

It is found in the cytoplasm. It catalyses the reaction Endonucleolytic cleavage to 5'-phosphomonoester.. Endonuclease that specifically degrades the RNA of RNA-DNA hybrids. This chain is Ribonuclease HII, found in Pyrococcus furiosus (strain ATCC 43587 / DSM 3638 / JCM 8422 / Vc1).